The primary structure comprises 214 residues: MRIILLGAPGAGKGTQAQFIMEQYGIPQISTGDMLRAAVKAGTPLGLEAKKVMDAGQLVSDDLIIGLVKERIAQEDCVKGFLLDGFPRTIPQADAMAANGISIDHVIEIDVPDEEIVKRMSGRRVHPGSGRVYHVVFNPPKVEGKDDVTGEDLAIRPDDEESTVRKRLAIYHEQTKPLVEYYGKVAAAGQTQYNKFDGTQSVAAVSEQLASVLK.

10 to 15 (GAGKGT) serves as a coordination point for ATP. Positions 30–59 (STGDMLRAAVKAGTPLGLEAKKVMDAGQLV) are NMP. AMP-binding positions include T31, R36, 57 to 59 (QLV), 85 to 88 (GFPR), and Q92. The LID stretch occupies residues 122–159 (GRRVHPGSGRVYHVVFNPPKVEGKDDVTGEDLAIRPDD). Residues R123 and 132–133 (VY) contribute to the ATP site. AMP contacts are provided by R156 and R167. Q200 is an ATP binding site.

The protein belongs to the adenylate kinase family. Monomer.

It is found in the cytoplasm. It carries out the reaction AMP + ATP = 2 ADP. Its pathway is purine metabolism; AMP biosynthesis via salvage pathway; AMP from ADP: step 1/1. Functionally, catalyzes the reversible transfer of the terminal phosphate group between ATP and AMP. Plays an important role in cellular energy homeostasis and in adenine nucleotide metabolism. The chain is Adenylate kinase from Shewanella baltica (strain OS155 / ATCC BAA-1091).